The chain runs to 144 residues: Gastric inhibitory polypeptide (144 aa).

The signal sequence occupies residues 1-21 (MVALKTCSLLLVLLFLAVGLG). 2 propeptides span residues 22–42 (EKEEVEFRSHAKFAGPRPRGP) and 87–144 (EARA…LRSQ). The tract at residues 94–113 (AGQSQGKEDKEAQESSLPKS) is disordered.

Belongs to the glucagon family.

The protein localises to the secreted. In terms of biological role, potent stimulator of insulin secretion and relatively poor inhibitor of gastric acid secretion. The polypeptide is Gastric inhibitory polypeptide (Gip) (Mus musculus (Mouse)).